The sequence spans 962 residues: Phenylalanine--tRNA ligase beta subunit (962 aa).

Residues 85 to 201 form the tRNA-binding domain; it reads TIRWCKVRVC…AEVFQGDELS (117 aa). The B5 domain occupies 456–538; the sequence is TQQSPILLST…RVIGFNRIPS (83 aa). Residues aspartate 516, aspartate 522, glutamate 525, and glutamate 526 each coordinate Mg(2+). The tract at residues 621–675 is insert; that stretch reads PDSTHNPDSGSDPIIPTGVTRITEPGSSGVSGPGNVGVKEKCSADTSIEHAPTTR. The FDX-ACB domain maps to 870-961; sequence PTSPAATQHL…ASSKFGAIMR (92 aa).

Belongs to the phenylalanyl-tRNA synthetase beta subunit family. Type 1 subfamily. Tetramer of two alpha and two beta subunits. The cofactor is Mg(2+).

Its subcellular location is the cytoplasm. The enzyme catalyses tRNA(Phe) + L-phenylalanine + ATP = L-phenylalanyl-tRNA(Phe) + AMP + diphosphate + H(+). This chain is Phenylalanine--tRNA ligase beta subunit, found in Tropheryma whipplei (strain Twist) (Whipple's bacillus).